Consider the following 833-residue polypeptide: Leucine--tRNA ligase (833 aa).

The 'HIGH' region motif lies at 41–52 (PYPSGAGLHVGH). Residues 610–614 (KMSKS) carry the 'KMSKS' region motif. Lysine 613 serves as a coordination point for ATP.

The protein belongs to the class-I aminoacyl-tRNA synthetase family.

It is found in the cytoplasm. The catalysed reaction is tRNA(Leu) + L-leucine + ATP = L-leucyl-tRNA(Leu) + AMP + diphosphate. In Streptococcus uberis (strain ATCC BAA-854 / 0140J), this protein is Leucine--tRNA ligase.